The primary structure comprises 1193 residues: MNNMNLNNMNLNNMNLLKEVSEENRLMLLKDYFQTSGLVKHQLETFDHFIFHDIKTIIDDEASIIFNGKRSLSSQIKNGAVEEGYNRKESEKIMLKFENVFVAKPTITNDDTTVRPLYPAEARQKMITYDSFVFVDVLEYVLRDEEEILVNKHLRVQIAKIPIMLRSSTCNLYNCTPQERIELGEGIEDPGGYFIINGNERVLIGQLRNAYNRSICFRNKFSEPLTCDMRSMSEETGHSVLIQLRLNDSPISQKRNLKKLDKNGTIDLIISQTKTPIPISFVFRVLKVATIDKLKFLIGDEEELDKYLIKIVEETSDGGIFDDMEIEISQEDDFNEENEESTEKKKITQFIEQDMFPHLGVSSTHEEKAILLGKMVRKLLLVNETSINANKFAQRANDETNKTNKTNKMYYTQEDRDNYSNKRVETAGVLCFELFRMLYKRFIKSNINQLEKRNRVEMDVISKNAFITTGLHFSFSTGNWGVQKNNYIRTGVAQIPQNKVSFGAFFSYLRRFVIPMGKEGKNTKIRQIHPSSIFFACPSETPEGQFVGITLNFSMLAEVSIRTSSVVIKEIIEASHQAFKHVHEISLEENKQFLSKLSIIFVNGGICGLTSKPQQLLSDVRDLKLKHCLKYDVSAVFIPELKEVHISSDAGRFIRPVLNLQSIKTNGNVMWNSFQNCLENGHVVYKDAYEIEQSQIAINLQDLSRYPTVYDSMEIHASCMLGVMAAQIPFAEHTQSPRLCYQSSMAKQAIGNIPSHHVKSDNTTRVMDYVQRPLVTTQIAEMNRFNDFPNGLNAMVAVAIYTGFNQEDSIILNKASIDRGMFHVVTYKTIIVEERKIGVNEKICMPVASVRRMNNYSLLEDNPESPYFGVVKVKSFVKRNDVLVGKVITKISKDGTRQETDHSTIVSISEEGKVDRIIRTSKKGILMFKIVIAQQKRPEIGDKFCSAMAQKGTVGMILEEVDMPFMEDGSIPDMIINPHCLPSRMTINQIMASIMGKTCCAKNETFGDASPFQESSLEKPQDKIHALCKELEECGYNYNGTETMMCGWNGKKLRAEIFFGPVYYHRLTHMVSDKIFSRASTNQKRHAITRQPLNGRANEGGLRIGEMEKDCMLVHGISKFLHEKMFDQSDKFIINLCVPCKSYFKVVKTQNGFFCSGCNGIDIVKFNCPFAAKLFFQELTAMGQKLEFKVKNA.

Asp-808 lines the Mg(2+) pocket. Positions 1137, 1140, 1155, and 1158 each coordinate Zn(2+). The segment at 1137-1158 adopts a C4-type zinc-finger fold; the sequence is CVPCKSYFKVVKTQNGFFCSGC.

It belongs to the RNA polymerase beta chain family.

The enzyme catalyses RNA(n) + a ribonucleoside 5'-triphosphate = RNA(n+1) + diphosphate. Functionally, component of the DNA-dependent RNA polymerase that catalyzes the transcription of DNA into RNA using the four ribonucleoside triphosphates as substrates. Second largest component of RNA polymerase II which synthesizes mRNA precursors and many functional non-coding RNAs. Proposed to contribute to the polymerase catalytic activity and forms the polymerase active center together with the largest subunit. The protein is Probable DNA-directed RNA polymerase II subunit RPB2 homolog of Invertebrate iridescent virus 6 (IIV-6).